The sequence spans 287 residues: Bifunctional protein FolD (287 aa).

NADP(+) contacts are provided by residues 171–173 (GHS), I196, and I237.

This sequence belongs to the tetrahydrofolate dehydrogenase/cyclohydrolase family. Homodimer.

The catalysed reaction is (6R)-5,10-methylene-5,6,7,8-tetrahydrofolate + NADP(+) = (6R)-5,10-methenyltetrahydrofolate + NADPH. It catalyses the reaction (6R)-5,10-methenyltetrahydrofolate + H2O = (6R)-10-formyltetrahydrofolate + H(+). Its pathway is one-carbon metabolism; tetrahydrofolate interconversion. Catalyzes the oxidation of 5,10-methylenetetrahydrofolate to 5,10-methenyltetrahydrofolate and then the hydrolysis of 5,10-methenyltetrahydrofolate to 10-formyltetrahydrofolate. This Methanosarcina mazei (strain ATCC BAA-159 / DSM 3647 / Goe1 / Go1 / JCM 11833 / OCM 88) (Methanosarcina frisia) protein is Bifunctional protein FolD.